A 427-amino-acid chain; its full sequence is SAC3 domain-containing protein 1 (427 aa).

2 stretches are compositionally biased toward basic and acidic residues: residues 1-10 (MGRFKGENRS) and 117-127 (ADPKRTVKEYS). 2 disordered regions span residues 1–53 (MGRF…QDAV) and 101–143 (LHRL…LLRP). A compositionally biased stretch (pro residues) spans 134–143 (PRPPPSLLRP). Residues 229-397 (QVQEGFGSLR…EGLPPPGAYH (169 aa)) form the PCI domain. S425 is modified (phosphoserine).

The protein belongs to the SAC3 family. In terms of assembly, may be part of a SEM1-containing complex. Present in spleen cells (at protein level).

The protein localises to the cytoplasm. It localises to the cytoskeleton. The protein resides in the microtubule organizing center. It is found in the centrosome. Its subcellular location is the spindle. Functionally, involved in centrosome duplication and mitotic progression. The protein is SAC3 domain-containing protein 1 (Sac3d1) of Mus musculus (Mouse).